A 156-amino-acid polypeptide reads, in one-letter code: Oxidized purine nucleoside triphosphate hydrolase (156 aa).

Residues 3-132 enclose the Nudix hydrolase domain; sequence TSRLYTLVLV…WFPLLLQKKK (130 aa). Thr8 contributes to the 2-oxo-dATP binding site. Lys23 lines the 8-oxo-dGTP pocket. 2-oxo-dATP is bound by residues Asn33 and 35–38; that span reads FGGK. Mg(2+) is bound by residues Gly36, Glu52, Glu55, Glu56, and Glu100. Residues 37 to 58 carry the Nudix box motif; that stretch reads GKVQEGETIEDGAKRELREESG. 117-120 lines the 2-oxo-dATP pocket; that stretch reads WPDD.

Belongs to the Nudix hydrolase family. Monomer. Requires Mg(2+) as cofactor.

It localises to the cytoplasm. The protein localises to the nucleus. It is found in the nucleus membrane. The protein resides in the cytoplasmic vesicle. Its subcellular location is the secretory vesicle. It localises to the acrosome. It catalyses the reaction 2-oxo-dATP + H2O = 2-oxo-dAMP + diphosphate + H(+). The catalysed reaction is 2-oxo-ATP + H2O = 2-oxo-AMP + diphosphate + H(+). It carries out the reaction 8-oxo-dGTP + H2O = 8-oxo-dGMP + diphosphate + H(+). The enzyme catalyses 8-oxo-dATP + H2O = 8-oxo-dAMP + diphosphate + H(+). It catalyses the reaction O(6)-methyl-dGTP + H2O = O(6)-methyl-dGMP + diphosphate + H(+). The catalysed reaction is N(6)-methyl-dATP + H2O = N(6)-methyl-dAMP + diphosphate + H(+). It carries out the reaction N(6)-methyl-ATP + H2O = N(6)-methyl-AMP + diphosphate + H(+). In terms of biological role, oxidized purine nucleoside triphosphate hydrolase which is a prominent sanitizer of the oxidized nucleotide pool. Catalyzes the hydrolysis of 2-oxo-dATP (2-hydroxy-dATP) into 2-oxo-dAMP. Also has a significant hydrolase activity toward 2-oxo-ATP, 8-oxo-dGTP and 8-oxo-dATP. Through the hydrolysis of oxidized purine nucleoside triphosphates, prevents their incorporation into DNA and the subsequent transversions A:T to C:G and G:C to T:A. Also catalyzes the hydrolysis of methylated purine nucleoside triphosphate preventing their integration into DNA. Through this antimutagenic activity protects cells from oxidative stress. This chain is Oxidized purine nucleoside triphosphate hydrolase (NUDT1), found in Canis lupus familiaris (Dog).